We begin with the raw amino-acid sequence, 282 residues long: NADPH-dependent 7-cyano-7-deazaguanine reductase (282 aa).

88–90 (IES) provides a ligand contact to substrate. 90–91 (SK) serves as a coordination point for NADPH. Cysteine 189 functions as the Thioimide intermediate in the catalytic mechanism. Aspartate 196 functions as the Proton donor in the catalytic mechanism. 228 to 229 (HE) provides a ligand contact to substrate. 257 to 258 (RG) lines the NADPH pocket.

Belongs to the GTP cyclohydrolase I family. QueF type 2 subfamily. Homodimer.

It localises to the cytoplasm. The catalysed reaction is 7-aminomethyl-7-carbaguanine + 2 NADP(+) = 7-cyano-7-deazaguanine + 2 NADPH + 3 H(+). Its pathway is tRNA modification; tRNA-queuosine biosynthesis. Its function is as follows. Catalyzes the NADPH-dependent reduction of 7-cyano-7-deazaguanine (preQ0) to 7-aminomethyl-7-deazaguanine (preQ1). This chain is NADPH-dependent 7-cyano-7-deazaguanine reductase, found in Photorhabdus laumondii subsp. laumondii (strain DSM 15139 / CIP 105565 / TT01) (Photorhabdus luminescens subsp. laumondii).